The primary structure comprises 292 residues: Pantothenate synthetase (292 aa).

30–37 contributes to the ATP binding site; that stretch reads MGALHEGH. Residue His37 is the Proton donor of the active site. (R)-pantoate is bound at residue Gln61. Gln61 is a beta-alanine binding site. 147-150 serves as a coordination point for ATP; that stretch reads GEKD. Position 153 (Gln153) interacts with (R)-pantoate. Residue 184–187 participates in ATP binding; that stretch reads VSSR.

The protein belongs to the pantothenate synthetase family. Homodimer.

It is found in the cytoplasm. The enzyme catalyses (R)-pantoate + beta-alanine + ATP = (R)-pantothenate + AMP + diphosphate + H(+). The protein operates within cofactor biosynthesis; (R)-pantothenate biosynthesis; (R)-pantothenate from (R)-pantoate and beta-alanine: step 1/1. Functionally, catalyzes the condensation of pantoate with beta-alanine in an ATP-dependent reaction via a pantoyl-adenylate intermediate. This chain is Pantothenate synthetase, found in Chlorobium phaeovibrioides (strain DSM 265 / 1930) (Prosthecochloris vibrioformis (strain DSM 265)).